Reading from the N-terminus, the 180-residue chain is Crossover junction endodeoxyribonuclease RuvC (180 aa).

Catalysis depends on residues Asp-7, Glu-66, and Asp-138. Mg(2+) contacts are provided by Asp-7, Glu-66, and Asp-138.

This sequence belongs to the RuvC family. Homodimer which binds Holliday junction (HJ) DNA. The HJ becomes 2-fold symmetrical on binding to RuvC with unstacked arms; it has a different conformation from HJ DNA in complex with RuvA. In the full resolvosome a probable DNA-RuvA(4)-RuvB(12)-RuvC(2) complex forms which resolves the HJ. It depends on Mg(2+) as a cofactor.

It localises to the cytoplasm. The enzyme catalyses Endonucleolytic cleavage at a junction such as a reciprocal single-stranded crossover between two homologous DNA duplexes (Holliday junction).. Its function is as follows. The RuvA-RuvB-RuvC complex processes Holliday junction (HJ) DNA during genetic recombination and DNA repair. Endonuclease that resolves HJ intermediates. Cleaves cruciform DNA by making single-stranded nicks across the HJ at symmetrical positions within the homologous arms, yielding a 5'-phosphate and a 3'-hydroxyl group; requires a central core of homology in the junction. The consensus cleavage sequence is 5'-(A/T)TT(C/G)-3'. Cleavage occurs on the 3'-side of the TT dinucleotide at the point of strand exchange. HJ branch migration catalyzed by RuvA-RuvB allows RuvC to scan DNA until it finds its consensus sequence, where it cleaves and resolves the cruciform DNA. The sequence is that of Crossover junction endodeoxyribonuclease RuvC from Paraburkholderia phytofirmans (strain DSM 17436 / LMG 22146 / PsJN) (Burkholderia phytofirmans).